The following is a 247-amino-acid chain: Malonyl-[acyl-carrier protein] O-methyltransferase (247 aa).

This sequence belongs to the methyltransferase superfamily.

It catalyses the reaction malonyl-[ACP] + S-adenosyl-L-methionine = malonyl-[ACP] methyl ester + S-adenosyl-L-homocysteine. The protein operates within cofactor biosynthesis; biotin biosynthesis. Functionally, converts the free carboxyl group of a malonyl-thioester to its methyl ester by transfer of a methyl group from S-adenosyl-L-methionine (SAM). It allows to synthesize pimeloyl-ACP via the fatty acid synthetic pathway. This Buchnera aphidicola subsp. Baizongia pistaciae (strain Bp) protein is Malonyl-[acyl-carrier protein] O-methyltransferase.